Here is a 492-residue protein sequence, read N- to C-terminus: Bifunctional protein GlmU (492 aa).

Residues 1 to 241 (MTFRGDTAVL…NALVAGVNNR (241 aa)) form a pyrophosphorylase region. Residues 12 to 15 (LAAG), lysine 26, glutamine 83, 88 to 89 (GT), 112 to 114 (SGD), glycine 151, glutamate 166, asparagine 181, and asparagine 239 contribute to the UDP-N-acetyl-alpha-D-glucosamine site. Residue aspartate 114 participates in Mg(2+) binding. Asparagine 239 provides a ligand contact to Mg(2+). Residues 242-262 (VQLAELSAELNRRIVATHQVA) are linker. The tract at residues 263–492 (GVTIIDPATT…KQSQQKSEPD (230 aa)) is N-acetyltransferase. UDP-N-acetyl-alpha-D-glucosamine contacts are provided by arginine 344 and lysine 362. Histidine 374 acts as the Proton acceptor in catalysis. Tyrosine 377 and asparagine 388 together coordinate UDP-N-acetyl-alpha-D-glucosamine. Acetyl-CoA-binding positions include alanine 391, 397-398 (NY), serine 416, and alanine 434. The segment at 461–492 (VQRKRPGSAAAQAAEKASTRTGKQSQQKSEPD) is disordered. Over residues 479 to 492 (TRTGKQSQQKSEPD) the composition is skewed to polar residues.

The protein in the N-terminal section; belongs to the N-acetylglucosamine-1-phosphate uridyltransferase family. In the C-terminal section; belongs to the transferase hexapeptide repeat family. In terms of assembly, homotrimer. Mg(2+) is required as a cofactor.

The protein resides in the cytoplasm. The catalysed reaction is alpha-D-glucosamine 1-phosphate + acetyl-CoA = N-acetyl-alpha-D-glucosamine 1-phosphate + CoA + H(+). It catalyses the reaction N-acetyl-alpha-D-glucosamine 1-phosphate + UTP + H(+) = UDP-N-acetyl-alpha-D-glucosamine + diphosphate. It functions in the pathway nucleotide-sugar biosynthesis; UDP-N-acetyl-alpha-D-glucosamine biosynthesis; N-acetyl-alpha-D-glucosamine 1-phosphate from alpha-D-glucosamine 6-phosphate (route II): step 2/2. The protein operates within nucleotide-sugar biosynthesis; UDP-N-acetyl-alpha-D-glucosamine biosynthesis; UDP-N-acetyl-alpha-D-glucosamine from N-acetyl-alpha-D-glucosamine 1-phosphate: step 1/1. Its pathway is bacterial outer membrane biogenesis; LPS lipid A biosynthesis. Functionally, catalyzes the last two sequential reactions in the de novo biosynthetic pathway for UDP-N-acetylglucosamine (UDP-GlcNAc). The C-terminal domain catalyzes the transfer of acetyl group from acetyl coenzyme A to glucosamine-1-phosphate (GlcN-1-P) to produce N-acetylglucosamine-1-phosphate (GlcNAc-1-P), which is converted into UDP-GlcNAc by the transfer of uridine 5-monophosphate (from uridine 5-triphosphate), a reaction catalyzed by the N-terminal domain. In Mycobacterium leprae (strain Br4923), this protein is Bifunctional protein GlmU.